A 378-amino-acid chain; its full sequence is MSKSLRKTHPLLKMANNALVDLPAPSNISAWWNFGSLLGLCLIIQILTGLFLAMHYTADIETAFNSVNHIYRDVNNGWFLRICHANGASFFFACLFIHVGRGVYYNSYLYIPTWMIGVIILFMVMATGFLGYVLPWGQMSFWGATVITNLLSAVPYLGTDLVQWIWGGFAVDNATLTRFFTFHFILPFIVLALTMIHLLFLHQTGSNNPLGLNSNVDKIPFHPYFVYKDIVGFIIFMWILIGFIWKFNYLLMDPENFIPANPLVTPVHIQPEWYFLFAYAILRSIPNKLGGVIALVLSIAILMILPFTHTSKFRGLQFYPLNQILFWNMVIVASLLTWIGARPVEDPYVLTGQILTVLYFSYFIINPLMSKYWDKLLN.

A run of 4 helical transmembrane segments spans residues 34–54, 78–99, 114–134, and 179–199; these read FGSL…FLAM, WFLR…FIHV, WMIG…GYVL, and FFTF…IHLL. Residues H84 and H98 each coordinate heme b. Heme b-binding residues include H183 and H197. Position 202 (H202) interacts with a ubiquinone. A run of 4 helical transmembrane segments spans residues 227 to 247, 289 to 309, 321 to 341, and 348 to 368; these read YKDI…IWKF, LGGV…PFTH, LNQI…WIGA, and YVLT…INPL.

Belongs to the cytochrome b family. In terms of assembly, the main subunits of complex b-c1 are: cytochrome b, cytochrome c1 and the Rieske protein. Heme b serves as cofactor.

It is found in the mitochondrion inner membrane. In terms of biological role, component of the ubiquinol-cytochrome c reductase complex (complex III or cytochrome b-c1 complex) that is part of the mitochondrial respiratory chain. The b-c1 complex mediates electron transfer from ubiquinol to cytochrome c. Contributes to the generation of a proton gradient across the mitochondrial membrane that is then used for ATP synthesis. This chain is Cytochrome b, found in Aedes aegypti (Yellowfever mosquito).